The chain runs to 239 residues: tRNA (guanine-N(7)-)-methyltransferase (239 aa).

Glutamate 69, glutamate 94, aspartate 121, and aspartate 144 together coordinate S-adenosyl-L-methionine. Aspartate 144 is an active-site residue. Substrate is bound at residue lysine 148. An interaction with RNA region spans residues 150 to 155 (RHNKRR). Substrate is bound by residues aspartate 180 and 217–220 (TKFE).

It belongs to the class I-like SAM-binding methyltransferase superfamily. TrmB family. Monomer.

The enzyme catalyses guanosine(46) in tRNA + S-adenosyl-L-methionine = N(7)-methylguanosine(46) in tRNA + S-adenosyl-L-homocysteine. The protein operates within tRNA modification; N(7)-methylguanine-tRNA biosynthesis. Catalyzes the formation of N(7)-methylguanine at position 46 (m7G46) in tRNA. The polypeptide is tRNA (guanine-N(7)-)-methyltransferase (Yersinia pestis (strain Pestoides F)).